The chain runs to 160 residues: Tumor suppressor ARF (160 aa).

The interval 1-63 is interaction with CDK5RAP3 and MDM2; the sequence is MGRRFVVTVR…RRGPQPHPGP (63 aa). Disordered stretches follow at residues 49–74 and 90–116; these read PERI…QSGS and HPLP…GRGA.

In terms of assembly, does not interact with cyclins, CDK1, CDK2, CDK4, CDK5 or CDK6. Binds to BCL6, E2F1, HUWE1, MDM2, MYC, NPM1/B23, TOP1/TOPOI and UBE2I/UBC9. Interacts with TBRG1 and COMMD1. Interacts with CDKN2AIP and E4F1. Interacts with CDK5RAP3 and MDM2; form a ternary complex involved in regulation of p53/TP53. Interacts with NOP53; the interaction is direct and promotes ARF nucleoplasmic relocalization and ubiquitin-mediated proteasomal degradation. Interacts with TTF1 (via the N-terminal region (NRD) and a C-terminal region); the interaction is direct and inhibits the nucleolar localization of TTF1. Post-translationally, ubiquitinated in normal cells by TRIP12 via the ubiquitin fusion degradation (UFD) pathway, a process that mediates ubiquitination at the N-terminus, regardless of the absence of lysine residues. Ubiquitination leads to its proteasomal degradation. In cancer cells, however, TRIP12 is located in a different cell compartment, preventing ubiquitination and degradation. Widely expressed with very low levels in kidney and colon.

It localises to the nucleus. The protein localises to the nucleolus. Its subcellular location is the nucleoplasm. Its function is as follows. Capable of inducing cell cycle arrest in G1 and G2 phases. Acts as a tumor suppressor. Binds to MDM2 and blocks its nucleocytoplasmic shuttling by sequestering it in the nucleolus. This inhibits the oncogenic action of MDM2 by blocking MDM2-induced degradation of p53 and enhancing p53-dependent transactivation and apoptosis. Also induces G2 arrest and apoptosis in a p53-independent manner by preventing the activation of cyclin B1/CDC2 complexes. Binds to BCL6 and down-regulates BCL6-induced transcriptional repression. Binds to E2F1 and MYC and blocks their transcriptional activator activity but has no effect on MYC transcriptional repression. Binds to TOP1/TOPOI and stimulates its activity. This complex binds to rRNA gene promoters and may play a role in rRNA transcription and/or maturation. Interacts with NPM1/B23 and promotes its polyubiquitination and degradation, thus inhibiting rRNA processing. Plays a role in inhibiting ribosome biogenesis, perhaps by binding to the nucleolar localization sequence of transcription termination factor TTF1, and thereby preventing nucleolar localization of TTF1. Interacts with COMMD1 and promotes its 'Lys63'-linked polyubiquitination. Interacts with UBE2I/UBC9 and enhances sumoylation of a number of its binding partners including MDM2 and E2F1. Binds to HUWE1 and represses its ubiquitin ligase activity. May play a role in controlling cell proliferation and apoptosis during mammary gland development. The chain is Tumor suppressor ARF from Rattus norvegicus (Rat).